The following is a 190-amino-acid chain: UPF0200 protein OE_4442F (190 aa).

8–15 (GMPGSGKS) contributes to the ATP binding site. A disordered region spans residues 120–144 (ARIEDRDRPGDTDGEPLDAREDRER).

This sequence belongs to the UPF0200 family.

The protein is UPF0200 protein OE_4442F of Halobacterium salinarum (strain ATCC 29341 / DSM 671 / R1).